The primary structure comprises 550 residues: Arginine--tRNA ligase (550 aa).

A 'HIGH' region motif is present at residues 130–140 (ANPTGPIHLGG).

Belongs to the class-I aminoacyl-tRNA synthetase family. In terms of assembly, monomer.

Its subcellular location is the cytoplasm. It carries out the reaction tRNA(Arg) + L-arginine + ATP = L-arginyl-tRNA(Arg) + AMP + diphosphate. This is Arginine--tRNA ligase from Corynebacterium diphtheriae (strain ATCC 700971 / NCTC 13129 / Biotype gravis).